Reading from the N-terminus, the 133-residue chain is Small ribosomal subunit protein eS8 (133 aa).

The segment at 1–22 (MGFYQGPDNRKITGGLKGKHRD) is disordered.

It belongs to the eukaryotic ribosomal protein eS8 family. In terms of assembly, part of the 30S ribosomal subunit.

This is Small ribosomal subunit protein eS8 from Saccharolobus islandicus (strain Y.N.15.51 / Yellowstone #2) (Sulfolobus islandicus).